The following is a 404-amino-acid chain: G1/S-specific cyclin-E2 (404 aa).

The disordered stretch occupies residues 1 to 44 (MSRRSSRLQAKQQPQPSQTESPQEAQIIQAKKRKTTQDVKKRRE). Over residues 12 to 26 (QQPQPSQTESPQEAQ) the composition is skewed to low complexity. Ser-21 is subject to Phosphoserine. Residues 35–44 (TTQDVKKRRE) show a composition bias toward basic and acidic residues. Position 348 is an N6-lactoyllysine (Lys-348). A Phosphoserine modification is found at Ser-383. A Phosphothreonine modification is found at Thr-392.

This sequence belongs to the cyclin family. Cyclin E subfamily. As to quaternary structure, interacts with the CDK2 (in vivo) and CDK3 (in vitro) protein kinases to form a serine/threonine kinase holoenzyme complex. The cyclin subunit imparts substrate specificity to the complex. Phosphorylation by CDK2 triggers its release from CDK2 and degradation via the ubiquitin proteasome pathway. In terms of processing, lactylated at Lys-348. Delactylated by SIRT3. According to PubMed:9858585, highest levels of expression in adult testis, thymus and brain. Lower levels in placenta, spleen and colon. Consistently elevated levels in tumor-derived cells compared to non-transformed proliferating cells. According to PubMed:9840927: low levels in thymus, prostate, brain, skeletal muscle, and kidney. Elevated levels in lung. According to PubMed:9840943 highly expressed in testis, placenta, thymus and brain. In a lesser extent in small intestine and colon.

The protein localises to the nucleus. Essential for the control of the cell cycle at the late G1 and early S phase. The polypeptide is G1/S-specific cyclin-E2 (CCNE2) (Homo sapiens (Human)).